Reading from the N-terminus, the 386-residue chain is Phosphoglycerate kinase (386 aa).

Residues 21–23, Arg36, 59–62, Arg113, and Arg146 each bind substrate; these read DLN and HLGR. Residues Lys197, Glu314, and 340–343 contribute to the ATP site; that span reads GGDT.

The protein belongs to the phosphoglycerate kinase family. As to quaternary structure, monomer.

It is found in the cytoplasm. The enzyme catalyses (2R)-3-phosphoglycerate + ATP = (2R)-3-phospho-glyceroyl phosphate + ADP. It participates in carbohydrate degradation; glycolysis; pyruvate from D-glyceraldehyde 3-phosphate: step 2/5. In Azotobacter vinelandii (strain DJ / ATCC BAA-1303), this protein is Phosphoglycerate kinase.